Reading from the N-terminus, the 185-residue chain is Elongation factor P (185 aa).

Belongs to the elongation factor P family.

The protein resides in the cytoplasm. It functions in the pathway protein biosynthesis; polypeptide chain elongation. Involved in peptide bond synthesis. Stimulates efficient translation and peptide-bond synthesis on native or reconstituted 70S ribosomes in vitro. Probably functions indirectly by altering the affinity of the ribosome for aminoacyl-tRNA, thus increasing their reactivity as acceptors for peptidyl transferase. The sequence is that of Elongation factor P from Streptococcus uberis (strain ATCC BAA-854 / 0140J).